We begin with the raw amino-acid sequence, 358 residues long: 3-O-methylredipecamine 2-O-methyltransferase IpeOMT3 (358 aa).

Residues glycine 193, aspartate 216, aspartate 236, methionine 237, and lysine 250 each contribute to the S-adenosyl-L-methionine site. Residue histidine 254 is the Proton acceptor of the active site.

The protein belongs to the class I-like SAM-binding methyltransferase superfamily. Cation-independent O-methyltransferase family. As to expression, expressed in roots.

The protein resides in the cytoplasm. It is found in the cytosol. The enzyme catalyses (S)-reticuline + S-adenosyl-L-methionine = (S)-laudanine + S-adenosyl-L-homocysteine + H(+). Its pathway is alkaloid biosynthesis. Functionally, O-methyltransferase involved in the biosynthesis of ipecac and benzylisoquinoline monoterpenoid-isoquinoline alkaloids natural products, starting by the condensation of dopamine and secologanin, and including emetine and cephaeline, drugs used both as anti-protozoal (e.g. treatment of ameobiasis) and as emetic agents. Catalyzes 2-O-methylation of 3-O-methylredipecamine and, with less efficiency, the 7-O-methylation of (S)-coclaurine, (R,S)-N-methylcoclaurine, (R,S)-4'-O-methylcoclaurine, (R,S)-6-O-methyllaudanosoline, nororientaline, (S)-norreticuline and (S)-reticuline. This chain is 3-O-methylredipecamine 2-O-methyltransferase IpeOMT3, found in Carapichea ipecacuanha (Ipecac).